A 907-amino-acid polypeptide reads, in one-letter code: Cytochrome b561, DM13 and DOMON domain-containing protein At5g54830 (907 aa).

Positions 1–24 are cleaved as a signal peptide; it reads MCDQRPNLLGSLVLLGFFIFFVNG. Positions 31–139 constitute a DM13 domain; that stretch reads SSLIGHESEF…ASDFGHVLLS (109 aa). Positions 144-172 are disordered; sequence SDTSKAESPPSESNDVAPGKSNNSEPFKA. Residues 153–168 are compositionally biased toward polar residues; that stretch reads PSESNDVAPGKSNNSE. 2 consecutive DOMON domains span residues 184-329 and 524-645; these read DKYR…WALG and QQVK…WAMG. The 198-residue stretch at 653 to 850 folds into the Cytochrome b561 domain; that stretch reads LTERNMHSVT…CVVTVAYLEY (198 aa). Residues 685–705 form a helical membrane-spanning segment; the sequence is VLGVHGFMMFLAWGILLPGGI. Heme b-binding residues include histidine 689 and histidine 723. The next 4 helical transmembrane spans lie at 730–750, 754–774, 795–815, and 829–849; these read GLAI…GFSF, HVKF…NAWL, SHSI…FTGM, and GLNL…AYLE. Heme b contacts are provided by histidine 754 and histidine 796. Positions 884 to 897 are enriched in basic and acidic residues; sequence GGFRDKDDEDRNGG. Residues 884-907 are disordered; it reads GGFRDKDDEDRNGGRMEIQLEPLK.

It depends on heme b as a cofactor.

The protein localises to the membrane. In terms of biological role, may act as a catecholamine-responsive trans-membrane electron transporter. The chain is Cytochrome b561, DM13 and DOMON domain-containing protein At5g54830 from Arabidopsis thaliana (Mouse-ear cress).